The sequence spans 219 residues: VQ motif-containing protein 19 (219 aa).

Positions 47–56 match the VQ motif; sequence FKQVVQMLTG. The interval 52–94 is disordered; sequence QMLTGSSSPRSPDSPRPPTTPSGKGNFVIPPIKTAQPKKHSGN. Phosphoserine is present on residues Ser59, Ser65, Ser127, Ser131, Ser139, Ser141, and Ser152. A Phosphothreonine modification is found at Thr155. 2 disordered regions span residues 156–177 and 190–219; these read PLKQGTNGNEGDPFDKMSPLSE and HRSPISTPRDSEPQLLPLFPVTSPRLSPEM. Phosphoserine occurs at positions 192 and 195. A phosphothreonine mark is found at Thr196 and Thr211. Phosphoserine is present on residues Ser212 and Ser216.

Post-translationally, phosphorylated on serine and threonine residues by MPK6.

Its subcellular location is the nucleus. May modulate WRKY transcription factor activities. The polypeptide is VQ motif-containing protein 19 (Arabidopsis thaliana (Mouse-ear cress)).